A 210-amino-acid chain; its full sequence is Small ribosomal subunit protein uS7 (210 aa).

This sequence belongs to the universal ribosomal protein uS7 family.

The chain is Small ribosomal subunit protein uS7 (RPS5) from Podocoryna carnea (Hydrozoan).